The chain runs to 153 residues: Insulin-like growth factor 1 (153 aa).

A b region spans residues 49-77 (GPETLCGAELVDALQFVCGDRGFYFSKPT). Disulfide bonds link cysteine 54–cysteine 96, cysteine 66–cysteine 109, and cysteine 95–cysteine 100. Residues 78-89 (GYGSSSRRLHHK) are c. The segment at 90 to 110 (GIVDECCFQSCDLRRLEMYCA) is a. The interval 111–118 (PIKPPKSA) is d. Positions 119–153 (RSVRAQRHTDMPKAQKEVHLKNTSRGNTGNRNYRM) are cleaved as a propeptide — e peptide. A disordered region spans residues 119-153 (RSVRAQRHTDMPKAQKEVHLKNTSRGNTGNRNYRM). Basic and acidic residues predominate over residues 125 to 138 (RHTDMPKAQKEVHL). Residues 139–153 (KNTSRGNTGNRNYRM) are compositionally biased toward polar residues.

The protein belongs to the insulin family. Forms a ternary complex with IGFR1 and ITGAV:ITGB3. Forms a ternary complex with IGFR1 and ITGA6:ITGB4. Forms a ternary complex with IGFBP3 and ALS.

The protein localises to the secreted. The insulin-like growth factors, isolated from plasma, are structurally and functionally related to insulin but have a much higher growth-promoting activity. Acts as a ligand for IGF1R. Binds to the alpha subunit of IGF1R, leading to the activation of the intrinsic tyrosine kinase activity which autophosphorylates tyrosine residues in the beta subunit thus initiatiating a cascade of down-stream signaling events leading to activation of the PI3K-AKT/PKB and the Ras-MAPK pathways. Binds to integrins. Its binding to integrins and subsequent ternary complex formation with integrins and IGFR1 are essential for IGF1 signaling. In Gallus gallus (Chicken), this protein is Insulin-like growth factor 1.